The chain runs to 683 residues: MAQEEIQKPTASVPVVKEETPAPVKEVEVPVTTEKAVAAPAPEATEEKVVSEVAVPETEVTAVKEEEVATGKEILQSESFKEEGYLASELQEAEKNALAELKELVREALNKREFTAPPPPPAPVKEEKVEEKKTEETEEKKEEVKTEEKSLEAETKEEEKSAAPATVETKKEEILAAPAPIVAETKKEETPVAPAPVETKPAAPVVAETKKEEILPAAPVTTETKVEEKVVPVETTPAAPVTTETKEEEKAAPVTTETKEEEKAAPGETKKEEKATASTQVKRASKFIKDIFVSVTTSEKKKEEEKPAVVTIEKAFAADQEEETKTVEAVEESIVSITLPETAAYVEPEEVSIWGIPLLEDERSDVILLKFLRARDFKVKEAFTMLKNTVQWRKENKIDDLVSEDLEGSEFEKLVFTHGVDKQGHVVIYSSYGEFQNKEIFSDKEKLSKFLKWRIQFQEKCVRSLDFSPEAKSSFVFVSDFRNAPGLGQRALWQFIKRAVKQFEDNYPEFVAKELFINVPWWYIPYYKTFGSIITSPRTRSKMVLSGPSKSAETIFKYVAPEVVPVKYGGLSKDSPFTVEDGVTEAVVKSTSKYTIDLPATEGSTLSWELRVLGADVSYGAQFEPSNEASYTVIVSKNRKVGLTDEPVITDSFKASEAGKVVITIDNQTFKKKKVLYRSKTQA.

The disordered stretch occupies residues 1–23 (MAQEEIQKPTASVPVVKEETPAP). Ala2 is subject to N-acetylalanine. Position 79 is a phosphoserine (Ser79). Residues 86-163 (LASELQEAEK…ETKEEEKSAA (78 aa)) adopt a coiled-coil conformation. Residues 111–279 (KREFTAPPPP…KKEEKATAST (169 aa)) are disordered. The span at 124–161 (VKEEKVEEKKTEETEEKKEEVKTEEKSLEAETKEEEKS) shows a compositional bias: basic and acidic residues. Positions 232 to 243 (PVETTPAAPVTT) are enriched in low complexity. The span at 244 to 275 (ETKEEEKAAPVTTETKEEEKAAPGETKKEEKA) shows a compositional bias: basic and acidic residues. Lys394 is covalently cross-linked (Glycyl lysine isopeptide (Lys-Gly) (interchain with G-Cter in ubiquitin)). In terms of domain architecture, CRAL-TRIO spans 404-576 (EDLEGSEFEK…KYGGLSKDSP (173 aa)). The region spanning 580-681 (EDGVTEAVVK…KKKVLYRSKT (102 aa)) is the GOLD domain.

This sequence belongs to the patellin family. As to quaternary structure, interacts with the deubiquitinating enzyme AMSH3.

It is found in the membrane. It localises to the cytoplasm. In terms of biological role, carrier protein that may be involved in membrane-trafficking events associated with cell plate formation during cytokinesis. Binds to some hydrophobic molecules such as phosphoinositides and promotes their transfer between the different cellular sites. The sequence is that of Patellin-2 (PATL2) from Arabidopsis thaliana (Mouse-ear cress).